A 119-amino-acid polypeptide reads, in one-letter code: Mitochondrial coiled-coil domain protein 1 (119 aa).

Residues 1–24 (MVLPLPWLSRYHFLRLLLPSWSLA) constitute a mitochondrion transit peptide. The interval 25 to 65 (PQGSHGCCSQNPKASMEEQTSSRGNGKMTSPPRGPGTHRTA) is disordered. A compositionally biased stretch (polar residues) spans 31–52 (CCSQNPKASMEEQTSSRGNGKM). Residues 62–116 (HRTAELARAEELLEQQLELYQALLEGQEGAWEAQALVLKIQKLKEQMRRHQESLG) are a coiled coil.

In terms of tissue distribution, widely expressed. Expressed in adult and fetal liver, kidney and lung. Expressed in fetal brain. Weakly expressed in fetal spleen.

The protein localises to the mitochondrion. This is Mitochondrial coiled-coil domain protein 1 (MCCD1) from Homo sapiens (Human).